The sequence spans 259 residues: Thiazole synthase (259 aa).

Lys-98 functions as the Schiff-base intermediate with DXP in the catalytic mechanism. 1-deoxy-D-xylulose 5-phosphate contacts are provided by residues Gly-159, 185 to 186, and 207 to 208; these read AG and NS.

It belongs to the ThiG family. In terms of assembly, homotetramer. Forms heterodimers with either ThiH or ThiS.

It is found in the cytoplasm. It catalyses the reaction [ThiS sulfur-carrier protein]-C-terminal-Gly-aminoethanethioate + 2-iminoacetate + 1-deoxy-D-xylulose 5-phosphate = [ThiS sulfur-carrier protein]-C-terminal Gly-Gly + 2-[(2R,5Z)-2-carboxy-4-methylthiazol-5(2H)-ylidene]ethyl phosphate + 2 H2O + H(+). It participates in cofactor biosynthesis; thiamine diphosphate biosynthesis. In terms of biological role, catalyzes the rearrangement of 1-deoxy-D-xylulose 5-phosphate (DXP) to produce the thiazole phosphate moiety of thiamine. Sulfur is provided by the thiocarboxylate moiety of the carrier protein ThiS. In vitro, sulfur can be provided by H(2)S. This is Thiazole synthase from Chlorobium phaeovibrioides (strain DSM 265 / 1930) (Prosthecochloris vibrioformis (strain DSM 265)).